We begin with the raw amino-acid sequence, 120 residues long: rRNA-processing protein CGR1 (120 aa).

Disordered regions lie at residues 1–26 (MVNE…KAEK) and 81–120 (ERRE…LKER). A coiled-coil region spans residues 47-106 (KKQKRLEDKQFKERLKALKDEKEEARQAKITMLKERREKKEENERYERLAAKMHAKKVER). A compositionally biased stretch (basic and acidic residues) spans 81-96 (ERREKKEENERYERLA). Residues 97 to 113 (AKMHAKKVERMRRREKR) are compositionally biased toward basic residues.

It belongs to the CGR1 family.

It is found in the nucleus. The protein resides in the nucleolus. Functionally, involved in nucleolar integrity and required for processing of the pre-rRNA for the 60S ribosome subunit. The protein is rRNA-processing protein CGR1 (CGR1) of Saccharomyces cerevisiae (strain ATCC 204508 / S288c) (Baker's yeast).